Here is a 168-residue protein sequence, read N- to C-terminus: Photosystem I assembly protein Ycf3 (168 aa).

3 TPR repeats span residues Ala35 to Pro68, Ser72 to Leu105, and Gly120 to Asn153.

The protein belongs to the Ycf3 family.

The protein resides in the plastid. The protein localises to the chloroplast thylakoid membrane. Functionally, essential for the assembly of the photosystem I (PSI) complex. May act as a chaperone-like factor to guide the assembly of the PSI subunits. The chain is Photosystem I assembly protein Ycf3 from Pelargonium hortorum (Common geranium).